Consider the following 154-residue polypeptide: D-ribose pyranase 2 (154 aa).

Catalysis depends on His-20, which acts as the Proton donor. Substrate-binding positions include Asp-28, His-98, and 121–123; that span reads WGN.

Belongs to the RbsD / FucU family. RbsD subfamily. Homodecamer.

The protein resides in the cytoplasm. The catalysed reaction is beta-D-ribopyranose = beta-D-ribofuranose. Its pathway is carbohydrate metabolism; D-ribose degradation; D-ribose 5-phosphate from beta-D-ribopyranose: step 1/2. In terms of biological role, catalyzes the interconversion of beta-pyran and beta-furan forms of D-ribose. In Rubrobacter xylanophilus (strain DSM 9941 / JCM 11954 / NBRC 16129 / PRD-1), this protein is D-ribose pyranase 2.